The following is a 669-amino-acid chain: Methionine--tRNA ligase (669 aa).

The 'HIGH' region signature appears at 15-25; the sequence is PYANGPAHIGH. Residues C146, C149, C158, and C162 each contribute to the Zn(2+) site. The short motif at 328-332 is the 'KMSKS' region element; it reads KFSKS. K331 contacts ATP. Residues 570–669 enclose the tRNA-binding domain; the sequence is QFKALDLRVG…KEVPAGCGIR (100 aa).

Belongs to the class-I aminoacyl-tRNA synthetase family. MetG type 1 subfamily. Homodimer. Zn(2+) is required as a cofactor.

It is found in the cytoplasm. The catalysed reaction is tRNA(Met) + L-methionine + ATP = L-methionyl-tRNA(Met) + AMP + diphosphate. Is required not only for elongation of protein synthesis but also for the initiation of all mRNA translation through initiator tRNA(fMet) aminoacylation. The chain is Methionine--tRNA ligase from Methanothrix thermoacetophila (strain DSM 6194 / JCM 14653 / NBRC 101360 / PT) (Methanosaeta thermophila).